The chain runs to 798 residues: Penicillin-binding protein 1A (798 aa).

At 1 to 9 (MIKKIVTTC) the chain is on the cytoplasmic side. Residues 10 to 30 (FGLVLGLCVFGVGLVAIAILV) form a helical; Signal-anchor for type II membrane protein membrane-spanning segment. Residues 31-798 (TYPKLPSLDS…SKQPQLDSLF (768 aa)) are Periplasmic-facing. The interval 50-218 (LTIYSADGEV…SAYNPIVNPE (169 aa)) is transglycosylase. Glu88 serves as the catalytic Proton donor; for transglycosylase activity. The tract at residues 414–700 (VVVQEPLLQA…GTIAVPVWVD (287 aa)) is transpeptidase. The active-site Acyl-ester intermediate; for transpeptidase activity is the Ser461. The interval 751–798 (SRRIREDKEAGAEDVERGAADEVRQEVQETPVLPSNTGSKQPQLDSLF) is disordered. Positions 753 to 777 (RIREDKEAGAEDVERGAADEVRQEV) are enriched in basic and acidic residues. Residues 783-798 (LPSNTGSKQPQLDSLF) show a composition bias toward polar residues.

The protein in the N-terminal section; belongs to the glycosyltransferase 51 family. It in the C-terminal section; belongs to the transpeptidase family.

It localises to the cell inner membrane. The catalysed reaction is [GlcNAc-(1-&gt;4)-Mur2Ac(oyl-L-Ala-gamma-D-Glu-L-Lys-D-Ala-D-Ala)](n)-di-trans,octa-cis-undecaprenyl diphosphate + beta-D-GlcNAc-(1-&gt;4)-Mur2Ac(oyl-L-Ala-gamma-D-Glu-L-Lys-D-Ala-D-Ala)-di-trans,octa-cis-undecaprenyl diphosphate = [GlcNAc-(1-&gt;4)-Mur2Ac(oyl-L-Ala-gamma-D-Glu-L-Lys-D-Ala-D-Ala)](n+1)-di-trans,octa-cis-undecaprenyl diphosphate + di-trans,octa-cis-undecaprenyl diphosphate + H(+). It carries out the reaction Preferential cleavage: (Ac)2-L-Lys-D-Ala-|-D-Ala. Also transpeptidation of peptidyl-alanyl moieties that are N-acyl substituents of D-alanine.. Its pathway is cell wall biogenesis; peptidoglycan biosynthesis. Functionally, cell wall formation. Synthesis of cross-linked peptidoglycan from the lipid intermediates. The enzyme has a penicillin-insensitive transglycosylase N-terminal domain (formation of linear glycan strands) and a penicillin-sensitive transpeptidase C-terminal domain (cross-linking of the peptide subunits). This is Penicillin-binding protein 1A (mrcA) from Neisseria cinerea.